Reading from the N-terminus, the 299-residue chain is F-actin-capping protein subunit alpha-3 (299 aa).

Phosphoserine is present on S290.

This sequence belongs to the F-actin-capping protein alpha subunit family. In terms of assembly, component of the F-actin capping complex, composed of a heterodimer of an alpha and a beta subunit. Component of the WASH complex, composed of F-actin-capping protein subunit alpha (CAPZA1, CAPZA2 or CAPZA3), F-actin-capping protein subunit beta (CAPZB), WASHC1, WASHC2, WASHC3, WASHC4 and WASHC5.

F-actin-capping proteins bind in a Ca(2+)-independent manner to the fast growing ends of actin filaments (barbed end) thereby blocking the exchange of subunits at these ends. Unlike other capping proteins (such as gelsolin and severin), these proteins do not sever actin filaments. May play a role in the morphogenesis of spermatid. The chain is F-actin-capping protein subunit alpha-3 (CAPZA3) from Macaca fascicularis (Crab-eating macaque).